We begin with the raw amino-acid sequence, 471 residues long: Ribulose bisphosphate carboxylase large chain (471 aa).

The propeptide occupies 1–2 (MS). Pro3 carries the post-translational modification N-acetylproline. N6,N6,N6-trimethyllysine is present on Lys14. The substrate site is built by Asn123 and Thr173. Catalysis depends on Lys175, which acts as the Proton acceptor. Position 177 (Lys177) interacts with substrate. Lys201, Asp203, and Glu204 together coordinate Mg(2+). At Lys201 the chain carries N6-carboxylysine. The Proton acceptor role is filled by His294. Positions 295, 327, and 379 each coordinate substrate.

This sequence belongs to the RuBisCO large chain family. Type I subfamily. Heterohexadecamer of 8 large chains and 8 small chains; disulfide-linked. The disulfide link is formed within the large subunit homodimers. It depends on Mg(2+) as a cofactor. In terms of processing, the disulfide bond which can form in the large chain dimeric partners within the hexadecamer appears to be associated with oxidative stress and protein turnover.

It localises to the plastid. Its subcellular location is the chloroplast. The catalysed reaction is 2 (2R)-3-phosphoglycerate + 2 H(+) = D-ribulose 1,5-bisphosphate + CO2 + H2O. It catalyses the reaction D-ribulose 1,5-bisphosphate + O2 = 2-phosphoglycolate + (2R)-3-phosphoglycerate + 2 H(+). Its function is as follows. RuBisCO catalyzes two reactions: the carboxylation of D-ribulose 1,5-bisphosphate, the primary event in carbon dioxide fixation, as well as the oxidative fragmentation of the pentose substrate in the photorespiration process. Both reactions occur simultaneously and in competition at the same active site. This Drymophloeus subdistichus (Palm tree) protein is Ribulose bisphosphate carboxylase large chain.